Here is an 84-residue protein sequence, read N- to C-terminus: Small ribosomal subunit protein uS17 (84 aa).

It belongs to the universal ribosomal protein uS17 family. In terms of assembly, part of the 30S ribosomal subunit.

Functionally, one of the primary rRNA binding proteins, it binds specifically to the 5'-end of 16S ribosomal RNA. This Clostridium novyi (strain NT) protein is Small ribosomal subunit protein uS17.